We begin with the raw amino-acid sequence, 158 residues long: MALWRLSVLCGAREGRALFLRTPVVRPALVSAFLQDRPAQGWCGTQHIHLSPSHHSGSKAASLHWTGERVVSVLLLGLIPAAYLNPCSAMDYSLAATLTLHSHWGIGQVVTDYVHGDAVQKAAKTGLLVLSAFTFAGLCYFNYHDVGICKAVAMLWKL.

The transit peptide at 1 to 55 (MALWRLSVLCGAREGRALFLRTPVVRPALVSAFLQDRPAQGWCGTQHIHLSPSHH) directs the protein to the mitochondrion. Residues 56–62 (SGSKAAS) are Mitochondrial matrix-facing. The helical transmembrane segment at 63-84 (LHWTGERVVSVLLLGLIPAAYL) threads the bilayer. The Mitochondrial intermembrane portion of the chain corresponds to 85 to 89 (NPCSA). Residues 90–110 (MDYSLAATLTLHSHWGIGQVV) traverse the membrane as a helical segment. Residue His101 coordinates heme b. At 111-119 (TDYVHGDAV) the chain is on the mitochondrial matrix side. Tyr113 lines the a ubiquinone pocket. A helical transmembrane segment spans residues 120–141 (QKAAKTGLLVLSAFTFAGLCYF). Over 142-158 (NYHDVGICKAVAMLWKL) the chain is Mitochondrial intermembrane.

Belongs to the CybS family. As to quaternary structure, component of complex II composed of four subunits: the flavoprotein (FP) SDHA, iron-sulfur protein (IP) SDHB, and a cytochrome b560 composed of SDHC and SDHD.

It is found in the mitochondrion inner membrane. Its pathway is carbohydrate metabolism; tricarboxylic acid cycle. Functionally, membrane-anchoring subunit of succinate dehydrogenase (SDH) that is involved in complex II of the mitochondrial electron transport chain and is responsible for transferring electrons from succinate to ubiquinone (coenzyme Q). SDH also oxidizes malate to the non-canonical enol form of oxaloacetate, enol-oxaloacetate. Enol-oxaloacetate, which is a potent inhibitor of the succinate dehydrogenase activity, is further isomerized into keto-oxaloacetate. The sequence is that of Succinate dehydrogenase [ubiquinone] cytochrome b small subunit, mitochondrial (SDHD) from Bos taurus (Bovine).